The following is a 39-amino-acid chain: Potassium channel toxin alpha-KTx 2.24 (39 aa).

Intrachain disulfides connect Cys-7-Cys-29, Cys-13-Cys-34, and Cys-17-Cys-36.

The protein belongs to the short scorpion toxin superfamily. Potassium channel inhibitor family. Alpha-KTx 02 subfamily. Expressed by the venom gland.

The protein localises to the secreted. Its function is as follows. Blocks human voltage-gated potassium (Kv) channels Kv1.1/KCNA, Kv1.2/KCNA2 and Kv1.3/KCNA3. Exhibits high affinity for Kv1.2/KCNA2 and selectivity over Kv1.1/KCNA and Kv1.3/KCNA3. The chain is Potassium channel toxin alpha-KTx 2.24 from Centruroides bonito (Scorpion).